A 250-amino-acid chain; its full sequence is Capsid protein (250 aa).

Residues 1-31 form a disordered region; that stretch reads MPKRDAPWLMAGTSKVSRSGNYSPSGGMGSK. The Bipartite nuclear localization signal signature appears at 3–19; the sequence is KRDAPWLMAGTSKVSRS. Polar residues predominate over residues 14–31; the sequence is SKVSRSGNYSPSGGMGSK. The Nuclear localization signal motif lies at 34 to 48; that stretch reads KANAWVNRPMYRKPR. Residues 53–70 fold into a zinc finger; it reads YKSPDVPKGCEGPCKVQS. The Nuclear export signal signature appears at 95-116; the sequence is ITHRVGKRFCVKSVYILGKIWM. The Bipartite nuclear localization signal signature appears at 194–241; that stretch reads RRFWKVNNHVVYNHQEAGKYENHTENALLLYMACTHASNPVYATLKIR.

This sequence belongs to the geminiviridae capsid protein family. As to quaternary structure, homomultimer. Binds to single-stranded and double-stranded viral DNA. Interacts (via nuclear localization signals) with host importin alpha-1a.

Its subcellular location is the virion. The protein resides in the host nucleus. In terms of biological role, encapsidates the viral DNA into characteristic twinned ('geminate') particles. Binds the genomic viral ssDNA and shuttles it into and out of the cell nucleus. The CP of bipartite geminiviruses is not required for cell-to-cell or systemic movement. This Bean golden yellow mosaic virus (isolate Puerto Rico) (BGYMV) protein is Capsid protein.